Reading from the N-terminus, the 139-residue chain is Nucleoside diphosphate kinase (139 aa).

ATP is bound by residues lysine 10, phenylalanine 58, arginine 86, threonine 92, arginine 103, and asparagine 113. Histidine 116 acts as the Pros-phosphohistidine intermediate in catalysis.

Belongs to the NDK family. As to quaternary structure, homotetramer. Mg(2+) serves as cofactor.

The protein localises to the cytoplasm. It carries out the reaction a 2'-deoxyribonucleoside 5'-diphosphate + ATP = a 2'-deoxyribonucleoside 5'-triphosphate + ADP. It catalyses the reaction a ribonucleoside 5'-diphosphate + ATP = a ribonucleoside 5'-triphosphate + ADP. Functionally, major role in the synthesis of nucleoside triphosphates other than ATP. The ATP gamma phosphate is transferred to the NDP beta phosphate via a ping-pong mechanism, using a phosphorylated active-site intermediate. This is Nucleoside diphosphate kinase from Caulobacter sp. (strain K31).